Consider the following 373-residue polypeptide: Transcription factor NF-E2 45 kDa subunit (373 aa).

Positions 1–83 (MSPCPPQQSR…SGFPLPPPPY (83 aa)) are required for interaction with MAPK8. Residues 1–206 (MSPCPPQQSR…PAAETPLALE (206 aa)) are transactivation domain. 2 consecutive short sequence motifs (PXY motif) follow at residues 61-65 (PPTTY) and 79-83 (PPPPY). Residues 127–150 (LDIGLPAGPPKPQEDPESDSGLSL) are disordered. A Phosphoserine; by MAPK8 modification is found at Ser157. Ser170 is subject to Phosphoserine; by PKA. Residues 205 to 226 (LEPSSGPVRAKPTARGEAGSRD) form a disordered region. Residues 266 to 329 (LVRDIRRRGK…EVMRQQLTEL (64 aa)) form the bZIP domain. The segment at 268–287 (RDIRRRGKNKVAAQNCRKRK) is basic motif. Residues 291–298 (IVQLEREL) are leucine-zipper. A Glycyl lysine isopeptide (Lys-Gly) (interchain with G-Cter in SUMO1) cross-link involves residue Lys368.

The protein belongs to the bZIP family. CNC subfamily. In terms of assembly, homodimer; can bind DNA as a homodimer. Erythroid transcription activator nuclear factor erythroid-derived 2 (NF-E2), composed of a heterodimer of NFE2 and MAFK, possesses transactivation activity on beta-globin. Also forms high affinity heterodimer with MAFG; the interaction promotes erythropoiesis. Interacts (via the PXY motif 1) with ITCH (via the WW 1 domain); the interaction promotes 'Lys63'-linked ubiquitination of NFE2, translocates it to the cytoplasm and inhibits its transactivation activity. Interacts with KMT2D/MLL2; the interaction promotes transactivation of the beta-globin locus. Interacts with MAPK8 (phosphorylated form); the interaction leads to phosphorylation of NFE2 in undifferentiated cells. Post-translationally, phosphorylated on serine residues. In undifferentiated erythrocytes, phosphorylated by MAPK8 which then leads to ubiquitination and protein degradation. Sumoylated. Sumoylation is required for translocation to nuclear bodies PODs, anchoring to the gene loci, and transactivation of the beta-globin gene. In terms of processing, ubiquitinated mainly by 'Lys63'-linked ubiquitin. Polyubiquitination with 'Lys63'-linked ubiquitin by ITCH retains NFE2 in the cytoplasm preventing its transactivation activity. In undifferentiated erythrocyte, ubiquitinated after MAPK8-mediatd phosphorylation leading to protein degradation. Expressed in hematopoietic cells and also in colon and testis.

It localises to the nucleus. It is found in the PML body. Its subcellular location is the cytoplasm. Component of the NF-E2 complex essential for regulating erythroid and megakaryocytic maturation and differentiation. Binds to the hypersensitive site 2 (HS2) of the beta-globin control region (LCR). This subunit (NFE2) recognizes the TCAT/C sequence of the AP-1-like core palindrome present in a number of erythroid and megakaryocytic gene promoters. Requires MAFK or other small MAF proteins for binding to the NF-E2 motif. May play a role in all aspects of hemoglobin production from globin and heme synthesis to procurement of iron. This is Transcription factor NF-E2 45 kDa subunit (NFE2) from Homo sapiens (Human).